The following is an 88-amino-acid chain: DNA-directed RNA polymerase subunit omega (88 aa).

It belongs to the RNA polymerase subunit omega family. The RNAP catalytic core consists of 2 alpha, 1 beta, 1 beta' and 1 omega subunit. When a sigma factor is associated with the core the holoenzyme is formed, which can initiate transcription.

It catalyses the reaction RNA(n) + a ribonucleoside 5'-triphosphate = RNA(n+1) + diphosphate. Functionally, promotes RNA polymerase assembly. Latches the N- and C-terminal regions of the beta' subunit thereby facilitating its interaction with the beta and alpha subunits. The polypeptide is DNA-directed RNA polymerase subunit omega (Pseudomonas aeruginosa (strain LESB58)).